The following is a 118-amino-acid chain: Putative pterin-4-alpha-carbinolamine dehydratase (118 aa).

The protein belongs to the pterin-4-alpha-carbinolamine dehydratase family.

It catalyses the reaction (4aS,6R)-4a-hydroxy-L-erythro-5,6,7,8-tetrahydrobiopterin = (6R)-L-erythro-6,7-dihydrobiopterin + H2O. The sequence is that of Putative pterin-4-alpha-carbinolamine dehydratase from Pseudomonas fluorescens (strain ATCC BAA-477 / NRRL B-23932 / Pf-5).